Consider the following 650-residue polypeptide: Phosphatidylinositol-3,5-bisphosphate 3-phosphatase MTMR14 (650 aa).

The disordered stretch occupies residues 1 to 27 (MAGARAAAAAASAGSSASSGNQPPQEL). K194 is subject to N6-acetyllysine. N-linked (GlcNAc...) asparagine glycosylation is present at N226. C330 acts as the Phosphocysteine intermediate in catalysis. Residues G333, W334, D335, R336, and R382 each contribute to the a 1,2-diacyl-sn-glycero-3-phospho-(1D-myo-inositol-3,5-bisphosphate) site. Residues G333, W334, D335, R336, and R382 each contribute to the a 1,2-diacyl-sn-glycero-3-phospho-(1D-myo-inositol-3-phosphate) site. The interval 476–546 (AAWRKSHSSS…PRSVDHPLPG (71 aa)) is disordered. At S518 the chain carries Phosphoserine. N-linked (GlcNAc...) asparagine glycosylation occurs at N519. 3 positions are modified to phosphoserine: S530, S580, and S624. R638 carries the omega-N-methylarginine modification.

It belongs to the protein-tyrosine phosphatase family. Non-receptor class myotubularin subfamily. In terms of tissue distribution, expressed in various tissues, including heart, skeletal muscle, placenta, liver, lung, kidney and pancreas.

The protein localises to the cytoplasm. The catalysed reaction is a 1,2-diacyl-sn-glycero-3-phospho-(1D-myo-inositol-3,5-bisphosphate) + H2O = a 1,2-diacyl-sn-glycero-3-phospho-(1D-myo-inositol-5-phosphate) + phosphate. It catalyses the reaction a 1,2-diacyl-sn-glycero-3-phospho-(1D-myo-inositol-3-phosphate) + H2O = a 1,2-diacyl-sn-glycero-3-phospho-(1D-myo-inositol) + phosphate. Functionally, lipid phosphatase that specifically dephosphorylates the D-3 position of phosphatidylinositol 3-phosphate and phosphatidylinositol 3,5-bisphosphate, generating phosphatidylinositol and phosphatidylinositol 5-phosphate. The protein is Phosphatidylinositol-3,5-bisphosphate 3-phosphatase MTMR14 of Homo sapiens (Human).